A 361-amino-acid polypeptide reads, in one-letter code: MRPLFYRCHNTTSVEKGNSATMGGVLFSTGLVGNLLALGLLARSGLGSCPPRSPRPPPSVFYVLVFGLTITDLLGKCLVSPFVLSAYAQNRSLRELVPGSDSSLCQAFAFIMSFFGLASTLQLLAMALECWLSLGHPFFHRRHLTPRRGAMVAPVVGAFCLAFCALPLVGFGKFVQYCPGTWCFFQMVHEERSLSVLSYSVLYASLMLLLVLAIVLCNLSAMRNLYAMHLRLRGLLRPGSRERAEPGAGEREATPLHLEELDHLLLLALMTVLFTMCSLPLIYRAYYGAFKAVPEQNGTTEETEDLRALRFLSVISIVDPWIFIIFRTSVFRMFFRKIFIRPLIYRNWHSNSCQTNMESSL.

Topologically, residues 1–21 are extracellular; the sequence is MRPLFYRCHNTTSVEKGNSAT. Asn10 carries an N-linked (GlcNAc...) asparagine glycan. The chain crosses the membrane as a helical span at residues 22 to 42; the sequence is MGGVLFSTGLVGNLLALGLLA. Topologically, residues 43 to 58 are cytoplasmic; it reads RSGLGSCPPRSPRPPP. The chain crosses the membrane as a helical span at residues 59 to 79; it reads SVFYVLVFGLTITDLLGKCLV. The Extracellular segment spans residues 80–107; sequence SPFVLSAYAQNRSLRELVPGSDSSLCQA. N-linked (GlcNAc...) asparagine glycosylation is present at Asn90. Cys105 and Cys183 are oxidised to a cystine. Residues 108-128 form a helical membrane-spanning segment; that stretch reads FAFIMSFFGLASTLQLLAMAL. The Cytoplasmic segment spans residues 129 to 150; that stretch reads ECWLSLGHPFFHRRHLTPRRGA. A helical membrane pass occupies residues 151 to 171; sequence MVAPVVGAFCLAFCALPLVGF. The Extracellular segment spans residues 172–195; that stretch reads GKFVQYCPGTWCFFQMVHEERSLS. A helical transmembrane segment spans residues 196–216; that stretch reads VLSYSVLYASLMLLLVLAIVL. The Cytoplasmic segment spans residues 217–262; that stretch reads CNLSAMRNLYAMHLRLRGLLRPGSRERAEPGAGEREATPLHLEELD. A helical transmembrane segment spans residues 263 to 283; that stretch reads HLLLLALMTVLFTMCSLPLIY. Over 284–310 the chain is Extracellular; that stretch reads RAYYGAFKAVPEQNGTTEETEDLRALR. N-linked (GlcNAc...) asparagine glycosylation occurs at Asn297. Residues 311–331 traverse the membrane as a helical segment; that stretch reads FLSVISIVDPWIFIIFRTSVF. The Cytoplasmic portion of the chain corresponds to 332-361; it reads RMFFRKIFIRPLIYRNWHSNSCQTNMESSL.

This sequence belongs to the G-protein coupled receptor 1 family.

The protein localises to the cell membrane. Its function is as follows. Receptor for prostaglandin D2 (PGD2). The activity of this receptor is mainly mediated by G(s) proteins that stimulate adenylate cyclase, resulting in an elevation of intracellular cAMP. A mobilization of calcium is also observed, but without formation of inositol 1,4,5-trisphosphate. Involved in PLA2G3-dependent maturation of mast cells. PLA2G3 is secreted by immature mast cells and acts on nearby fibroblasts upstream to PTDGS to synthesize PGD2, which in turn promotes mast cell maturation and degranulation via PTGDR. The sequence is that of Prostaglandin D2 receptor (PTGDR) from Bos taurus (Bovine).